Reading from the N-terminus, the 127-residue chain is MIYGVGIDIINIKRVEHILSKNKQSFVKRVLSEHEQALFANKGDSAAYCAKRFAAKEAFAKALGTGIGKIISFQDLTVRNNENGKPNFFLSEKLRLYLVNKNIKQAHLSLSDEKFNTVAFVILETED.

Residues D8 and E57 each contribute to the Mg(2+) site.

The protein belongs to the P-Pant transferase superfamily. AcpS family. The cofactor is Mg(2+).

It localises to the cytoplasm. The catalysed reaction is apo-[ACP] + CoA = holo-[ACP] + adenosine 3',5'-bisphosphate + H(+). Its function is as follows. Transfers the 4'-phosphopantetheine moiety from coenzyme A to a Ser of acyl-carrier-protein. The sequence is that of Holo-[acyl-carrier-protein] synthase from Ruthia magnifica subsp. Calyptogena magnifica.